Here is a 521-residue protein sequence, read N- to C-terminus: Bifunctional purine biosynthesis protein PurH (521 aa).

One can recognise an MGS-like domain in the interval 1–145; sequence MIKQALISVS…KNHRDVTVVV (145 aa).

The protein belongs to the PurH family.

The catalysed reaction is (6R)-10-formyltetrahydrofolate + 5-amino-1-(5-phospho-beta-D-ribosyl)imidazole-4-carboxamide = 5-formamido-1-(5-phospho-D-ribosyl)imidazole-4-carboxamide + (6S)-5,6,7,8-tetrahydrofolate. The enzyme catalyses IMP + H2O = 5-formamido-1-(5-phospho-D-ribosyl)imidazole-4-carboxamide. The protein operates within purine metabolism; IMP biosynthesis via de novo pathway; 5-formamido-1-(5-phospho-D-ribosyl)imidazole-4-carboxamide from 5-amino-1-(5-phospho-D-ribosyl)imidazole-4-carboxamide (10-formyl THF route): step 1/1. Its pathway is purine metabolism; IMP biosynthesis via de novo pathway; IMP from 5-formamido-1-(5-phospho-D-ribosyl)imidazole-4-carboxamide: step 1/1. The chain is Bifunctional purine biosynthesis protein PurH from Paraburkholderia phymatum (strain DSM 17167 / CIP 108236 / LMG 21445 / STM815) (Burkholderia phymatum).